The following is a 108-amino-acid chain: Kanamycin resistance protein (108 aa).

In terms of domain architecture, N-acetyltransferase spans 1-99; the sequence is SRTLLLERGR…PAVYMVQTRQ (99 aa).

The protein is Kanamycin resistance protein of Rhizobium radiobacter (Agrobacterium tumefaciens).